The sequence spans 90 residues: Acylphosphatase (90 aa).

Residues 3 to 90 form the Acylphosphatase-like domain; sequence QYRIIVDGRV…DGFQKFNISY (88 aa). Active-site residues include Arg18 and Asn36.

It belongs to the acylphosphatase family.

It catalyses the reaction an acyl phosphate + H2O = a carboxylate + phosphate + H(+). The sequence is that of Acylphosphatase (acyP) from Bacillus licheniformis (strain ATCC 14580 / DSM 13 / JCM 2505 / CCUG 7422 / NBRC 12200 / NCIMB 9375 / NCTC 10341 / NRRL NRS-1264 / Gibson 46).